A 94-amino-acid chain; its full sequence is Late cornified envelope protein 3C (94 aa).

Over residues 1–10 (MSCQQNQQQC) the composition is skewed to low complexity. 2 disordered regions span residues 1-35 (MSCQ…PPSS) and 65-94 (CRRQ…GGCC). Over residues 11–34 (QPPPSCPSPKCPPKSPAQCLPPPS) the composition is skewed to pro residues. Residues 78 to 94 (GQQGGGSCRGHGSGGCC) show a composition bias toward gly residues.

The protein belongs to the LCE family. In terms of assembly, interacts with CYSRT1; the interaction is direct. In terms of tissue distribution, skin-specific. Expression was readily detected in adult trunk skin, adult arm skin, fetal skin, penal skin, vulva, esophagus and tongue. Not expressed in the cervix, rectum, lung, colon, or placenta.

Functionally, a structural component of the cornified envelope of the stratum corneum involved in innate cutaneous host defense. Possesses defensin-like antimicrobial activity against a broad spectrum of Gram-positive and Gram-negative bacteria, both aerobic and anaerobic species. Upon inflammation, may regulate skin barrier repair by shaping cutaneous microbiota composition and immune response to bacterial antigens. The chain is Late cornified envelope protein 3C from Homo sapiens (Human).